A 161-amino-acid polypeptide reads, in one-letter code: Copper transporter 1 (161 aa).

2 helical membrane passes run G55–L75 and V109–V129.

Belongs to the copper transporter (Ctr) (TC 1.A.56) family. SLC31A subfamily. In terms of assembly, self-interacts. Interacts with SWEET11 and COPT2.

Its subcellular location is the cell membrane. In terms of biological role, involved in the transport of copper, in cooperation with SWEET11 and COPT2. Contributes to the removal of copper (Cu) from xylem, and thus to the sensitivity toward bacterial pathogens such as X.oryzae pv. oryzae (Xoo). This chain is Copper transporter 1 (COPT1), found in Oryza sativa subsp. japonica (Rice).